The sequence spans 490 residues: E3 ubiquitin-protein ligase Hakai (490 aa).

The tract at residues Gln-34 to Glu-60 is disordered. The segment at Cys-108 to Ser-148 adopts an RING-type zinc-finger fold. Positions Cys-147–His-205 are HYB domain. Residues Phe-163 to His-189 form a C2H2-type zinc finger. Residues Ser-200, Ser-284, and Ser-289 each carry the phosphoserine modification. The segment at Gln-254–Gln-490 is disordered. Composition is skewed to pro residues over residues Ala-341 to Pro-358, Ala-371 to Gly-388, and Met-398 to His-422. Positions Asn-426 to Pro-441 are enriched in polar residues. Positions Pro-456–Pro-477 are enriched in pro residues.

Belongs to the Hakai family. In terms of assembly, homodimer. Interacts with tyrosine-phosphorylated SRC substrates. Component of the WMM complex, a N6-methyltransferase complex composed of a catalytic subcomplex, named MAC, and of an associated subcomplex, named MACOM. The MAC subcomplex is composed of METTL3 and METTL14. The MACOM subcomplex is composed of WTAP, ZC3H13, CBLL1/HAKAI, VIRMA, and, in some cases of RBM15 (RBM15 or RBM15B). Also a component of a MACOM-like complex, named WTAP complex, composed of WTAP, ZC3H13, CBLL1, VIRMA, RBM15, BCLAF1 and THRAP3. Phosphorylated on tyrosine residues.

It is found in the nucleus speckle. Its subcellular location is the nucleus. It localises to the nucleoplasm. The protein resides in the cytoplasm. The catalysed reaction is S-ubiquitinyl-[E2 ubiquitin-conjugating enzyme]-L-cysteine + [acceptor protein]-L-lysine = [E2 ubiquitin-conjugating enzyme]-L-cysteine + N(6)-ubiquitinyl-[acceptor protein]-L-lysine.. Its pathway is protein modification; protein ubiquitination. Its function is as follows. E3 ubiquitin-protein ligase that mediates ubiquitination of several tyrosine-phosphorylated Src substrates, including CDH1, CTTN and DOK1. Targets CDH1 for endocytosis and degradation. Associated component of the WMM complex, a complex that mediates N6-methyladenosine (m6A) methylation of RNAs, a modification that plays a role in the efficiency of mRNA splicing and RNA processing. Its function in the WMM complex is unknown. The sequence is that of E3 ubiquitin-protein ligase Hakai from Macaca fascicularis (Crab-eating macaque).